The primary structure comprises 405 residues: Deoxyguanosinetriphosphate triphosphohydrolase-like protein (405 aa).

The 145-residue stretch at 75–219 (RLTHTIEVAQ…AAIADDIAYN (145 aa)) folds into the HD domain.

This sequence belongs to the dGTPase family. Type 2 subfamily.

The chain is Deoxyguanosinetriphosphate triphosphohydrolase-like protein from Sinorhizobium medicae (strain WSM419) (Ensifer medicae).